The primary structure comprises 272 residues: Acyl-[acyl-carrier-protein]--UDP-N-acetylglucosamine O-acyltransferase (272 aa).

Belongs to the transferase hexapeptide repeat family. LpxA subfamily. In terms of assembly, homotrimer.

It localises to the cytoplasm. The enzyme catalyses a (3R)-hydroxyacyl-[ACP] + UDP-N-acetyl-alpha-D-glucosamine = a UDP-3-O-[(3R)-3-hydroxyacyl]-N-acetyl-alpha-D-glucosamine + holo-[ACP]. It participates in glycolipid biosynthesis; lipid IV(A) biosynthesis; lipid IV(A) from (3R)-3-hydroxytetradecanoyl-[acyl-carrier-protein] and UDP-N-acetyl-alpha-D-glucosamine: step 1/6. In terms of biological role, involved in the biosynthesis of lipid A, a phosphorylated glycolipid that anchors the lipopolysaccharide to the outer membrane of the cell. In Rhizobium johnstonii (strain DSM 114642 / LMG 32736 / 3841) (Rhizobium leguminosarum bv. viciae), this protein is Acyl-[acyl-carrier-protein]--UDP-N-acetylglucosamine O-acyltransferase.